We begin with the raw amino-acid sequence, 296 residues long: ATP synthase gamma chain (296 aa).

It belongs to the ATPase gamma chain family. As to quaternary structure, F-type ATPases have 2 components, CF(1) - the catalytic core - and CF(0) - the membrane proton channel. CF(1) has five subunits: alpha(3), beta(3), gamma(1), delta(1), epsilon(1). CF(0) has three main subunits: a, b and c.

Its subcellular location is the cell membrane. Produces ATP from ADP in the presence of a proton gradient across the membrane. The gamma chain is believed to be important in regulating ATPase activity and the flow of protons through the CF(0) complex. The sequence is that of ATP synthase gamma chain from Pseudarthrobacter chlorophenolicus (strain ATCC 700700 / DSM 12829 / CIP 107037 / JCM 12360 / KCTC 9906 / NCIMB 13794 / A6) (Arthrobacter chlorophenolicus).